The primary structure comprises 338 residues: Lipoate-protein ligase A (338 aa).

The BPL/LPL catalytic domain maps to 29-216 (PATQRVLFLW…AFFSHYGERV (188 aa)). ATP-binding positions include Arg-71, 76 to 79 (GAVF), and Lys-134. Lys-134 is a binding site for (R)-lipoate.

Belongs to the LplA family. In terms of assembly, monomer.

It is found in the cytoplasm. It catalyses the reaction L-lysyl-[lipoyl-carrier protein] + (R)-lipoate + ATP = N(6)-[(R)-lipoyl]-L-lysyl-[lipoyl-carrier protein] + AMP + diphosphate + H(+). Its pathway is protein modification; protein lipoylation via exogenous pathway; protein N(6)-(lipoyl)lysine from lipoate: step 1/2. It participates in protein modification; protein lipoylation via exogenous pathway; protein N(6)-(lipoyl)lysine from lipoate: step 2/2. Its function is as follows. Catalyzes both the ATP-dependent activation of exogenously supplied lipoate to lipoyl-AMP and the transfer of the activated lipoyl onto the lipoyl domains of lipoate-dependent enzymes. In Klebsiella pneumoniae (strain 342), this protein is Lipoate-protein ligase A.